Here is a 123-residue protein sequence, read N- to C-terminus: Small ribosomal subunit protein uS12 (123 aa).

D89 is subject to 3-methylthioaspartic acid. The interval 101–123 is disordered; it reads SLDTSGVKDRKQGRSKYGAKRPK. Basic residues predominate over residues 113–123; the sequence is GRSKYGAKRPK.

This sequence belongs to the universal ribosomal protein uS12 family. In terms of assembly, part of the 30S ribosomal subunit. Contacts proteins S8 and S17. May interact with IF1 in the 30S initiation complex.

Its function is as follows. With S4 and S5 plays an important role in translational accuracy. In terms of biological role, interacts with and stabilizes bases of the 16S rRNA that are involved in tRNA selection in the A site and with the mRNA backbone. Located at the interface of the 30S and 50S subunits, it traverses the body of the 30S subunit contacting proteins on the other side and probably holding the rRNA structure together. The combined cluster of proteins S8, S12 and S17 appears to hold together the shoulder and platform of the 30S subunit. This chain is Small ribosomal subunit protein uS12, found in Stutzerimonas stutzeri (strain A1501) (Pseudomonas stutzeri).